Here is a 372-residue protein sequence, read N- to C-terminus: L-selectin (372 aa).

Residues 1–28 (MIFPWKCQSTQRDLCNIFKLWGWTMLCC) form the signal peptide. Residues 29 to 38 (DFLAHHGTDC) constitute a propeptide that is removed on maturation. Residues 39-332 (WTYHYSEKPM…FSMIKEGDYN (294 aa)) lie on the Extracellular side of the membrane. The region spanning 55–155 (RFCRENYTDL…ACHKLKAALC (101 aa)) is the C-type lectin domain. 10 disulfides stabilise this stretch: Cys57-Cys155, Cys128-Cys147, Cys128-Cys160, Cys160-Cys171, Cys165-Cys180, Cys182-Cys191, Cys197-Cys241, Cys227-Cys254, Cys259-Cys303, and Cys289-Cys316. N-linked (GlcNAc...) asparagine glycosylation is found at Asn60 and Asn104. Residues Glu118, Asn120, Glu126, Asn143, and Asp144 each contribute to the Ca(2+) site. The 37-residue stretch at 156–192 (YTASCQPWSCSGHGECVEIINNYTCNCDVGYYGPQCQ) folds into the EGF-like domain. Asn177 carries an N-linked (GlcNAc...) asparagine glycan. 2 consecutive Sushi domains span residues 195 to 256 (IQCE…TCQV) and 257 to 318 (IQCE…ICQK). N-linked (GlcNAc...) asparagine glycans are attached at residues Asn216, Asn226, Asn232, Asn246, and Asn271. The helical transmembrane segment at 333 to 355 (PLFIPVAVMVTAFSGLAFIIWLA) threads the bilayer. The Cytoplasmic segment spans residues 356–372 (RRLKKGKKSKKSMDDPY).

This sequence belongs to the selectin/LECAM family. In terms of assembly, interaction with SELPLG/PSGL1 and PODXL2 is required for promoting recruitment and rolling of leukocytes. This interaction is dependent on the sialyl Lewis X glycan modification of SELPLG and PODXL2, and tyrosine sulfation modifications of SELPLG. Sulfation on 'Tyr-51' of SELPLG is important for L-selectin binding. In terms of processing, N-glycosylated.

It localises to the cell membrane. Its function is as follows. Calcium-dependent lectin that mediates cell adhesion by binding to glycoproteins on neighboring cells. Mediates the adherence of lymphocytes to endothelial cells of high endothelial venules in peripheral lymph nodes. Promotes initial tethering and rolling of leukocytes in endothelia. The protein is L-selectin (SELL) of Pongo pygmaeus (Bornean orangutan).